Reading from the N-terminus, the 742-residue chain is Glucosylceramidase (742 aa).

N-linked (GlcNAc...) asparagine glycans are attached at residues asparagine 37 and asparagine 160. The active-site Proton donor is the glutamate 258. An N-linked (GlcNAc...) asparagine glycan is attached at asparagine 388. Residue glutamate 492 is the Nucleophile of the active site. N-linked (GlcNAc...) asparagine glycans are attached at residues asparagine 552, asparagine 560, and asparagine 698. The helical transmembrane segment at 701–721 (IAQILVAVVILLLGVLVAYYA) threads the bilayer.

The protein belongs to the glycosyl hydrolase 5 (cellulase A) family.

Its subcellular location is the membrane. It catalyses the reaction a beta-D-glucosyl-(1&lt;-&gt;1')-N-acylsphing-4-enine + H2O = an N-acylsphing-4-enine + D-glucose. Functionally, specifically hydrolyzes the glucosidic linkage in glucosylceramide. May prevent accumulation of aberrent glucosylceramide containing immature ceramide. The sequence is that of Glucosylceramidase from Cryptococcus neoformans var. grubii serotype A (strain H99 / ATCC 208821 / CBS 10515 / FGSC 9487) (Filobasidiella neoformans var. grubii).